The primary structure comprises 454 residues: Chromosomal replication initiator protein DnaA (454 aa).

Positions 1–76 (MNKLKTDLNL…IGASFRILAK (76 aa)) are domain I, interacts with DnaA modulators. The segment at 76–113 (KNPKIIFAQESPGNGEKATGKKIKSLPREDKSSIFESK) is domain II. The domain III, AAA+ region stretch occupies residues 114–330 (GLNTKFSFEN…GALNRLCAYA (217 aa)). ATP is bound by residues glycine 158, glycine 160, lysine 161, and threonine 162. The tract at residues 331–454 (SIHKEGKITL…KITEQLTSSQ (124 aa)) is domain IV, binds dsDNA.

The protein belongs to the DnaA family. In terms of assembly, oligomerizes as a right-handed, spiral filament on DNA at oriC.

It is found in the cytoplasm. Functionally, plays an essential role in the initiation and regulation of chromosomal replication. ATP-DnaA binds to the origin of replication (oriC) to initiate formation of the DNA replication initiation complex once per cell cycle. Binds the DnaA box (a 9 base pair repeat at the origin) and separates the double-stranded (ds)DNA. Forms a right-handed helical filament on oriC DNA; dsDNA binds to the exterior of the filament while single-stranded (ss)DNA is stabiized in the filament's interior. The ATP-DnaA-oriC complex binds and stabilizes one strand of the AT-rich DNA unwinding element (DUE), permitting loading of DNA polymerase. After initiation quickly degrades to an ADP-DnaA complex that is not apt for DNA replication. Binds acidic phospholipids. In Methylacidiphilum infernorum (isolate V4) (Methylokorus infernorum (strain V4)), this protein is Chromosomal replication initiator protein DnaA.